A 397-amino-acid chain; its full sequence is Lysophospholipid transporter LplT (397 aa).

11 helical membrane passes run Met-16–Ala-36, Val-53–Ala-73, Leu-91–Ile-111, Leu-139–Ala-159, Leu-164–Ile-184, Leu-227–Leu-247, Ala-253–Ala-273, Thr-281–Val-301, Leu-305–Pro-325, Asn-352–Pro-372, and Val-373–Trp-393.

Belongs to the major facilitator superfamily. LplT (TC 2.A.1.42) family.

It localises to the cell inner membrane. Catalyzes the facilitated diffusion of 2-acyl-glycero-3-phosphoethanolamine (2-acyl-GPE) into the cell. This is Lysophospholipid transporter LplT from Klebsiella pneumoniae (strain 342).